We begin with the raw amino-acid sequence, 443 residues long: Xaa-Pro dipeptidase (443 aa).

D246, D257, H339, E384, and E423 together coordinate Mn(2+).

It belongs to the peptidase M24B family. Bacterial-type prolidase subfamily. The cofactor is Mn(2+).

It carries out the reaction Xaa-L-Pro dipeptide + H2O = an L-alpha-amino acid + L-proline. Splits dipeptides with a prolyl residue in the C-terminal position. In Shigella boydii serotype 18 (strain CDC 3083-94 / BS512), this protein is Xaa-Pro dipeptidase.